The chain runs to 310 residues: Homoserine kinase (310 aa).

91-101 lines the ATP pocket; the sequence is PIGSGLGSSAC.

Belongs to the GHMP kinase family. Homoserine kinase subfamily.

The protein resides in the cytoplasm. It carries out the reaction L-homoserine + ATP = O-phospho-L-homoserine + ADP + H(+). It participates in amino-acid biosynthesis; L-threonine biosynthesis; L-threonine from L-aspartate: step 4/5. Functionally, catalyzes the ATP-dependent phosphorylation of L-homoserine to L-homoserine phosphate. The polypeptide is Homoserine kinase (Escherichia coli O6:K15:H31 (strain 536 / UPEC)).